The sequence spans 547 residues: 2-succinyl-5-enolpyruvyl-6-hydroxy-3-cyclohexene-1-carboxylate synthase (547 aa).

Belongs to the TPP enzyme family. MenD subfamily. As to quaternary structure, homodimer. It depends on Mg(2+) as a cofactor. Mn(2+) is required as a cofactor. Requires thiamine diphosphate as cofactor.

The enzyme catalyses isochorismate + 2-oxoglutarate + H(+) = 5-enolpyruvoyl-6-hydroxy-2-succinyl-cyclohex-3-ene-1-carboxylate + CO2. Its pathway is quinol/quinone metabolism; 1,4-dihydroxy-2-naphthoate biosynthesis; 1,4-dihydroxy-2-naphthoate from chorismate: step 2/7. It participates in quinol/quinone metabolism; menaquinone biosynthesis. Its function is as follows. Catalyzes the thiamine diphosphate-dependent decarboxylation of 2-oxoglutarate and the subsequent addition of the resulting succinic semialdehyde-thiamine pyrophosphate anion to isochorismate to yield 2-succinyl-5-enolpyruvyl-6-hydroxy-3-cyclohexene-1-carboxylate (SEPHCHC). The polypeptide is 2-succinyl-5-enolpyruvyl-6-hydroxy-3-cyclohexene-1-carboxylate synthase (Mycobacterium sp. (strain JLS)).